The sequence spans 1081 residues: FHIP family protein GA25918 (1081 aa).

A compositionally biased stretch (polar residues) spans 1–11; sequence MSWLRSSPLRQ. 5 disordered regions span residues 1–31, 504–524, 650–685, 830–913, and 933–1027; these read MSWLRSSPLRQSGNGGGGGVSTGHSSTGSLR, ARPKSVHEQQAPSGATGEQPI, ADEESDATDLTVTTTTASEADLEHNSSSVSSGMGGG, NENS…AASS, and NNNN…SEPA. Serine 508 carries the post-translational modification Phosphoserine. A compositionally biased stretch (low complexity) spans 657-668; the sequence is TDLTVTTTTASE. A Phosphoserine modification is found at serine 833. Residues 840–856 show a composition bias toward low complexity; that stretch reads QPQTTLSQQQQQQQGQQ. Polar residues predominate over residues 857–876; the sequence is RSAYATLSAATPVQATQTSA. Composition is skewed to low complexity over residues 891-913 and 933-953; these read SKSISSMFSRRSTPNPPSSAASS and NNNNSGSGGQSQPFSSTGTGT. Over residues 954–963 the composition is skewed to polar residues; that stretch reads CETSLSTNPQ. A compositionally biased stretch (low complexity) spans 964–993; that stretch reads SGAAAARSTGTATTANGNSSNSNISIGGST. Residues 994 to 1010 show a composition bias toward polar residues; it reads QTLSGHSNTTTYSSSTL.

This sequence belongs to the FHIP family.

The protein is FHIP family protein GA25918 of Drosophila pseudoobscura pseudoobscura (Fruit fly).